Here is a 100-residue protein sequence, read N- to C-terminus: Urease subunit gamma (100 aa).

The protein belongs to the urease gamma subunit family. In terms of assembly, heterotrimer of UreA (gamma), UreB (beta) and UreC (alpha) subunits. Three heterotrimers associate to form the active enzyme.

It localises to the cytoplasm. It carries out the reaction urea + 2 H2O + H(+) = hydrogencarbonate + 2 NH4(+). Its pathway is nitrogen metabolism; urea degradation; CO(2) and NH(3) from urea (urease route): step 1/1. This chain is Urease subunit gamma, found in Thioalkalivibrio sulfidiphilus (strain HL-EbGR7).